A 627-amino-acid chain; its full sequence is UvrABC system protein C (627 aa).

One can recognise a GIY-YIG domain in the interval 26–105; the sequence is PEPGVYFMRD…IKQHQPYFNV (80 aa). Residues 215–250 enclose the UVR domain; sequence QELIDILSEQMEKAAEALNFEVAARIRDQIAGLKSL.

The protein belongs to the UvrC family. Interacts with UvrB in an incision complex.

The protein localises to the cytoplasm. The UvrABC repair system catalyzes the recognition and processing of DNA lesions. UvrC both incises the 5' and 3' sides of the lesion. The N-terminal half is responsible for the 3' incision and the C-terminal half is responsible for the 5' incision. This is UvrABC system protein C from Nostoc sp. (strain PCC 7120 / SAG 25.82 / UTEX 2576).